The sequence spans 358 residues: Peptide chain release factor 1 (358 aa).

Glutamine 234 is modified (N5-methylglutamine).

The protein belongs to the prokaryotic/mitochondrial release factor family. Post-translationally, methylated by PrmC. Methylation increases the termination efficiency of RF1.

Its subcellular location is the cytoplasm. Functionally, peptide chain release factor 1 directs the termination of translation in response to the peptide chain termination codons UAG and UAA. This Leifsonia xyli subsp. xyli (strain CTCB07) protein is Peptide chain release factor 1.